We begin with the raw amino-acid sequence, 218 residues long: Sodium channel regulatory subunit beta-1 (218 aa).

The first 18 residues, 1–18, serve as a signal peptide directing secretion; sequence MGRLLALVVGAALVSSAC. Residues 19-157 lie on the Extracellular side of the membrane; that stretch reads GGCVEVDSET…DKANRDMASI (139 aa). 2 disulfide bridges follow: Cys21–Cys43 and Cys40–Cys121. Residues 22 to 150 enclose the Ig-like C2-type domain; that stretch reads VEVDSETEAV…KIHIEVVDKA (129 aa). N-linked (GlcNAc...) asparagine glycans are attached at residues Asn93, Asn110, Asn114, and Asn135. A helical transmembrane segment spans residues 158 to 179; the sequence is VSEIMMYVLIVVLTIWLVAEMI. The Cytoplasmic segment spans residues 180 to 218; it reads YCYKKIAAATETAAQENASEYLAITSESKENCTGVQVAE.

This sequence belongs to the sodium channel auxiliary subunit SCN1B (TC 8.A.17) family. Voltage-gated sodium (Nav) channel consists of an ion-conducting pore-forming alpha subunit functional on its own that is regulated by one or more beta subunits. Interacts with SCN1A; regulatory subunit of SCN1A/Nav1.1. Interacts with SCN3A; regulatory subunit of SCN3A/Nav1.3. Interacts with SCN4A; regulatory subunit of SCN4A/Nav1.4. Interacts with SCN5A; regulatory subunit of SCN5A/Nav1.5. Interacts with SCN8A; regulatory subunit of SCN8A/Nav1.6. Interacts with SCN9A; regulatory subunit of SCN9A/Nav1.7. Interacts with SCN10A; regulatory subunit of SCN10A/Nav1.8. Interacts with NFASC. Interacts with TMEM65. As to expression, the overall expression of isoform 1 and isoform 2 is very similar. Isoform 1 is abundantly expressed in skeletal muscle, heart and brain. Isoform 2 is highly expressed in brain and skeletal muscle and present at a very low level in heart, placenta, lung, liver, kidney and pancreas. In brain, isoform 2 is most abundant in the cerebellum, followed by the cerebral cortex and occipital lobe, while isoform 1 levels are higher in the cortex compared to the cerebellum. Isoform 2 is expressed in many regions of the brain, including cerebellar Purkinje cells, cortex pyramidal neurons and many of the neuronal fibers throughout the brain (at protein level). Also detected in dorsal root ganglion, in fibers of the spinal nerve and in cortical neurons and their processes (at protein level).

The protein localises to the cell membrane. Its subcellular location is the perikaryon. The protein resides in the cell projection. It is found in the axon. It localises to the secreted. Regulatory subunit of multiple voltage-gated sodium (Nav) channels directly mediating the depolarization of excitable membranes. Navs, also called VGSCs (voltage-gated sodium channels) or VDSCs (voltage-dependent sodium channels), operate by switching between closed and open conformations depending on the voltage difference across the membrane. In the open conformation they allow Na(+) ions to selectively pass through the pore, along their electrochemical gradient. The influx of Na+ ions provokes membrane depolarization, initiating the propagation of electrical signals throughout cells and tissues. The accessory beta subunits participate in localization and functional modulation of the Nav channels. Modulates the activity of SCN1A/Nav1.1, SCN2A/Nav1.2, SCN3A/Nav1.3, SCN4A/Nav1.4, SCN5A/Nav1.5, SCN8A/Nav1.6, SCN9A/Nav1.7 and SCN10A/Nav1.8. Functionally, cell adhesion molecule that plays a critical role in neuronal migration and pathfinding during brain development. Stimulates neurite outgrowth. Has no regulatory function on the SCN2A sodium channel complex. In Homo sapiens (Human), this protein is Sodium channel regulatory subunit beta-1.